The primary structure comprises 63 residues: Large ribosomal subunit protein uL29 (63 aa).

The protein belongs to the universal ribosomal protein uL29 family.

The protein is Large ribosomal subunit protein uL29 of Neisseria meningitidis serogroup C (strain 053442).